The sequence spans 352 residues: DNA integrity scanning protein DisA (352 aa).

The region spanning 3–143 is the DAC domain; that stretch reads PQELIEKIKL…NYKYVVNQVD (141 aa). Residues Gly71, Leu89, and 102 to 106 contribute to the ATP site; that span reads TRHRT.

The protein belongs to the DisA family. In terms of assembly, homooctamer. Mg(2+) serves as cofactor.

It carries out the reaction 2 ATP = 3',3'-c-di-AMP + 2 diphosphate. In terms of biological role, participates in a DNA-damage check-point. DisA forms globular foci that rapidly scan along the chromosomes searching for lesions. Also has diadenylate cyclase activity, catalyzing the condensation of 2 ATP molecules into cyclic di-AMP (c-di-AMP). c-di-AMP likely acts as a signaling molecule that may couple DNA integrity with a cellular process. This chain is DNA integrity scanning protein DisA, found in Thermotoga neapolitana (strain ATCC 49049 / DSM 4359 / NBRC 107923 / NS-E).